A 325-amino-acid chain; its full sequence is 1-aminocyclopropane-1-carboxylate oxidase 2 (325 aa).

The region spanning 157–257 is the Fe2OG dioxygenase domain; sequence PTFGTKVSNY…RMSIASFYNP (101 aa). Positions 181, 183, and 238 each coordinate Fe cation.

The protein belongs to the iron/ascorbate-dependent oxidoreductase family. Requires Fe cation as cofactor.

The catalysed reaction is 1-aminocyclopropane-1-carboxylate + L-ascorbate + O2 = ethene + L-dehydroascorbate + hydrogen cyanide + CO2 + 2 H2O. It participates in alkene biosynthesis; ethylene biosynthesis via S-adenosyl-L-methionine; ethylene from S-adenosyl-L-methionine: step 2/2. In Doritaenopsis sp. (Moth orchid), this protein is 1-aminocyclopropane-1-carboxylate oxidase 2 (ACO2).